A 432-amino-acid polypeptide reads, in one-letter code: Neuronal pentraxin-1 (432 aa).

Positions M1–A22 are cleaved as a signal peptide. The disordered stretch occupies residues E90–S122. N-linked (GlcNAc...) asparagine glycosylation is found at N154 and N193. Residues D226–C428 enclose the Pentraxin (PTX) domain. A disulfide bond links C256 and C316. Residues N280, E358, Q359, D360, and Q370 each contribute to the Ca(2+) site.

As to quaternary structure, homooligomer or heterooligomer (probably pentamer) with neuronal pentraxin receptor (NPTXR). The cofactor is Ca(2+).

The protein localises to the secreted. It localises to the cytoplasmic vesicle. It is found in the secretory vesicle. Its subcellular location is the endoplasmic reticulum. Functionally, may be involved in mediating uptake of synaptic material during synapse remodeling or in mediating the synaptic clustering of AMPA glutamate receptors at a subset of excitatory synapses. The sequence is that of Neuronal pentraxin-1 (NPTX1) from Homo sapiens (Human).